The primary structure comprises 658 residues: Probable Xaa-Pro aminopeptidase P (658 aa).

D449, D460, E558, and E572 together coordinate Mn(2+).

This sequence belongs to the peptidase M24B family. Mn(2+) is required as a cofactor.

It carries out the reaction Release of any N-terminal amino acid, including proline, that is linked to proline, even from a dipeptide or tripeptide.. In terms of biological role, catalyzes the removal of a penultimate prolyl residue from the N-termini of peptides. In Aspergillus clavatus (strain ATCC 1007 / CBS 513.65 / DSM 816 / NCTC 3887 / NRRL 1 / QM 1276 / 107), this protein is Probable Xaa-Pro aminopeptidase P (ampp).